Reading from the N-terminus, the 130-residue chain is Large ribosomal subunit protein eL32 (130 aa).

It belongs to the eukaryotic ribosomal protein eL32 family.

The polypeptide is Large ribosomal subunit protein eL32 (rpl32e) (Pyrococcus abyssi (strain GE5 / Orsay)).